A 103-amino-acid polypeptide reads, in one-letter code: Large ribosomal subunit protein bL21 (103 aa).

Belongs to the bacterial ribosomal protein bL21 family. As to quaternary structure, part of the 50S ribosomal subunit. Contacts protein L20.

This protein binds to 23S rRNA in the presence of protein L20. This is Large ribosomal subunit protein bL21 from Shewanella amazonensis (strain ATCC BAA-1098 / SB2B).